The chain runs to 231 residues: Acyl-protein thioesterase 2 (231 aa).

C2 carries the S-palmitoyl cysteine lipid modification. Position 82 is a phosphoserine (S82). Catalysis depends on charge relay system residues S122, D176, and H210.

Belongs to the AB hydrolase superfamily. AB hydrolase 2 family.

The protein localises to the cytoplasm. It catalyses the reaction S-hexadecanoyl-L-cysteinyl-[protein] + H2O = L-cysteinyl-[protein] + hexadecanoate + H(+). It carries out the reaction prostaglandin E2 1-glyceryl ester + H2O = prostaglandin E2 + glycerol + H(+). The catalysed reaction is 1-hexadecanoyl-sn-glycero-3-phosphocholine + H2O = sn-glycerol 3-phosphocholine + hexadecanoate + H(+). The enzyme catalyses 1-octadecanoyl-sn-glycero-3-phosphocholine + H2O = octadecanoate + sn-glycerol 3-phosphocholine + H(+). It catalyses the reaction 1-hexadecanoyl-sn-glycero-3-phosphate + H2O = sn-glycerol 3-phosphate + hexadecanoate + H(+). It carries out the reaction 1-hexadecanoyl-sn-glycero-3-phospho-L-serine + H2O = sn-glycero-3-phospho-L-serine + hexadecanoate + H(+). Functionally, acts as an acyl-protein thioesterase hydrolyzing fatty acids from S-acylated cysteine residues in proteins such as trimeric G alpha proteins, GSDMD, GAP43, ZDHHC6 or HRAS. Deacylates GAP43. Mediates depalmitoylation of ZDHHC6. Has lysophospholipase activity. Hydrolyzes prostaglandin glycerol esters (PG-Gs) in the following order prostaglandin D2-glycerol ester (PGD2-G) &gt; prostaglandin E2 glycerol ester (PGE2-G) &gt; prostaglandin F2-alpha-glycerol ester (PGF2-alpha-G). Hydrolyzes 1-arachidonoylglycerol but not 2-arachidonoylglycerol or arachidonoylethanolamide. This Rattus norvegicus (Rat) protein is Acyl-protein thioesterase 2 (Lypla2).